Reading from the N-terminus, the 172-residue chain is METRKPAERLALPYSLRTAPLGVPGTLPGLPRRDPLRVALRLDAACWEWARSGCARGWQYLPVPLDSAFEPAFLRKRNERERQRVRCVNEGYARLRDHLPRELADKRLSKVETLRAAIDYIKHLQELLERQAWGLEGAAGAVPQRRAECNSDGESKASSAPSPSSEPEEGGS.

Residues 72 to 124 form the bHLH domain; the sequence is AFLRKRNERERQRVRCVNEGYARLRDHLPRELADKRLSKVETLRAAIDYIKHL. Residues 144–172 form a disordered region; that stretch reads QRRAECNSDGESKASSAPSPSSEPEEGGS. Over residues 145–155 the composition is skewed to basic and acidic residues; the sequence is RRAECNSDGES. The segment covering 156-165 has biased composition (low complexity); that stretch reads KASSAPSPSS.

Expressed in skin. 7-fold higher expression in fetal skin than in adult skin. Weak expression also detected in fetal lung, aorta and brain, and in adult stomach, kidney, ovary and breast.

Its subcellular location is the nucleus. Its function is as follows. Could be a transcriptional regulator involved in skin development. The sequence is that of Achaete-scute homolog 4 (ASCL4) from Homo sapiens (Human).